Consider the following 372-residue polypeptide: MKIGIPREIKNNENRVGLSPSGVHALVESGHTVLVETNAGSGSFFEDVDYKEAGAEIVAEQAKVWDVDMVIKVKEPLESEYPYFKEGLVLFTYLHLANEEKLTQALIDRKVISIAYETVQLPDRSLPLLSPMSEVAGRMSAQVGAEFLQKLNGGMGILLGGVPGVPKGKVTIIGGGQAGTNAAKIALGLGADVTILDVNPKRLQQLDDLFGGRVHTIMSNPLNIELYVKQSDLVIGAVLIPGAKAPRLVTEDMIKQMKNGSVIIDIAIDQGGIFETTDKITTHDDPTYIKHGVVHYAVANMPGAVPRTSTLALNNATLPYALMLANKGYREAFKSNQPLSLGLNTYKGHVTNKGVAEAFEMEYKSVEEALHL.

H95 is an active-site residue. K169 to N199 serves as a coordination point for NAD(+).

It belongs to the AlaDH/PNT family.

The enzyme catalyses L-alanine + NAD(+) + H2O = pyruvate + NH4(+) + NADH + H(+). The protein operates within amino-acid degradation; L-alanine degradation via dehydrogenase pathway; NH(3) and pyruvate from L-alanine: step 1/1. Its function is as follows. May play a role in cell wall synthesis as L-alanine is an important constituent of the peptidoglycan layer. This chain is Alanine dehydrogenase 2 (ald2), found in Staphylococcus aureus (strain MRSA252).